Here is a 411-residue protein sequence, read N- to C-terminus: Secretion apparatus protein BsaZ (411 aa).

4 helical membrane passes run 28–48, 80–100, 137–157, and 175–195; these read IVAL…VDLT, IAAP…LVQS, ALLY…LYHA, and IVLT…VLIL. A disordered region spans residues 341–411; that stretch reads AANRGGPPPE…APARTGDQNA (71 aa). Positions 370–404 are enriched in low complexity; the sequence is DACADNAFPDDAPPGAAAPNAGSPDSPAPDGGAPA.

It belongs to the type III secretion exporter family.

The protein localises to the cell membrane. In terms of biological role, part of the bsa type III secretion system, is involved in the intracellular replication of invading bacteria inside the host cell. Probably necessary for the lysis of the vacuole membrane and escape into the host cell cytoplasm. This is Secretion apparatus protein BsaZ (bsaZ) from Burkholderia pseudomallei (strain 1106a).